Consider the following 113-residue polypeptide: U11-theraphotoxin-Hhn1g (113 aa).

Residues 1-21 (MNTVRVTFLLVFVLAVSLGQA) form the signal peptide. Positions 22-74 (DKDENRMEMQEKTEQGKSYLDFAENLLLQKLEELEAKLLEEDSEESRNSRQKR) are excised as a propeptide. A disordered region spans residues 61–83 (EEDSEESRNSRQKRCIGEGVPCD). Disulfide bonds link cysteine 75/cysteine 90, cysteine 82/cysteine 95, and cysteine 89/cysteine 110.

It belongs to the neurotoxin 14 (magi-1) family. 01 (HNTX-16) subfamily. As to expression, expressed by the venom gland.

The protein localises to the secreted. Its function is as follows. Probable ion channel inhibitor. This Cyriopagopus hainanus (Chinese bird spider) protein is U11-theraphotoxin-Hhn1g.